A 342-amino-acid chain; its full sequence is N-acetyl-gamma-glutamyl-phosphate reductase (342 aa).

Cys149 is a catalytic residue.

The protein belongs to the NAGSA dehydrogenase family. Type 1 subfamily.

The protein resides in the cytoplasm. The catalysed reaction is N-acetyl-L-glutamate 5-semialdehyde + phosphate + NADP(+) = N-acetyl-L-glutamyl 5-phosphate + NADPH + H(+). It participates in amino-acid biosynthesis; L-arginine biosynthesis; N(2)-acetyl-L-ornithine from L-glutamate: step 3/4. Functionally, catalyzes the NADPH-dependent reduction of N-acetyl-5-glutamyl phosphate to yield N-acetyl-L-glutamate 5-semialdehyde. The chain is N-acetyl-gamma-glutamyl-phosphate reductase from Nitrosomonas eutropha (strain DSM 101675 / C91 / Nm57).